A 500-amino-acid chain; its full sequence is NAD(P)H-quinone oxidoreductase chain 4, chloroplastic (500 aa).

Transmembrane regions (helical) follow at residues 4 to 24 (FPWLTIIVVFPIFAGSLIFFL), 35 to 55 (YTICICILELLLTTYAFCYHF), 87 to 107 (IGPILLTGFITTLATLAAWPV), 113 to 130 (LFHFLMLAMYSGQIGLFS), 134 to 154 (LLLFFIMWELELIPVYLLLAM), 167 to 187 (FILYTAGGSVFLLMGVLGVAL), 208 to 228 (VLEIIFYIGFFIAFAVKSPII), 242 to 262 (HYSTCMLLAGILLKMGAYGLI), 272 to 292 (AHSIFSPWLMIIGTIQIIYAA), 305 to 325 (IAYSSVSHMGFIIIGISSLTD), 330 to 350 (GALLQIISHGFIGAALFFLAG), 386 to 406 (LALPGMSGFVAELIVFFGIIT), 416 to 436 (LLITFVMAIGIILTPIYSLSM), and 462 to 482 (LFLSISIFLPVIGIGIYPDFV).

It belongs to the complex I subunit 4 family.

Its subcellular location is the plastid. It is found in the chloroplast thylakoid membrane. It carries out the reaction a plastoquinone + NADH + (n+1) H(+)(in) = a plastoquinol + NAD(+) + n H(+)(out). The catalysed reaction is a plastoquinone + NADPH + (n+1) H(+)(in) = a plastoquinol + NADP(+) + n H(+)(out). The protein is NAD(P)H-quinone oxidoreductase chain 4, chloroplastic of Solanum lycopersicum (Tomato).